Here is a 259-residue protein sequence, read N- to C-terminus: Probable 6-phosphogluconolactonase 2 (259 aa).

The protein belongs to the glucosamine/galactosamine-6-phosphate isomerase family. 6-phosphogluconolactonase subfamily.

The protein localises to the cytoplasm. It is found in the cytosol. The catalysed reaction is 6-phospho-D-glucono-1,5-lactone + H2O = 6-phospho-D-gluconate + H(+). Its pathway is carbohydrate degradation; pentose phosphate pathway; D-ribulose 5-phosphate from D-glucose 6-phosphate (oxidative stage): step 2/3. Catalyzes the hydrolysis of 6-phosphogluconolactone to 6-phosphogluconate. The chain is Probable 6-phosphogluconolactonase 2 from Arabidopsis thaliana (Mouse-ear cress).